The chain runs to 953 residues: Pyruvate, phosphate dikinase, chloroplastic (953 aa).

A chloroplast-targeting transit peptide spans 1 to 77; it reads MMSSLSVEGM…VLNPVSPPVT (77 aa). The segment at 55–74 is disordered; that stretch reads PELRSSGLTPPRAVLNPVSP. Thr-533 is subject to Phosphothreonine; by PDRP1. The active-site Tele-phosphohistidine intermediate is the His-535. Positions 641, 698, 827, 848, 849, 850, and 851 each coordinate substrate. Glu-827 contributes to the Mg(2+) binding site. Asp-851 contributes to the Mg(2+) binding site. Residue Cys-913 is the Proton donor of the active site.

This sequence belongs to the PEP-utilizing enzyme family. In terms of assembly, homotetramer. Requires Mg(2+) as cofactor. Post-translationally, phosphorylation of Thr-533 in the dark inactivates the enzyme. Dephosphorylation upon light stimulation reactivates the enzyme.

Its subcellular location is the plastid. It is found in the chloroplast. It carries out the reaction pyruvate + phosphate + ATP = phosphoenolpyruvate + AMP + diphosphate + H(+). It participates in photosynthesis; C4 acid pathway. Activated by light-induced dephosphorylation. Inhibited by dark-induced phosphorylation. Both reactions are catalyzed by PDRP1. Inactivated by cold due to the dissociation of the homotetramer. Formation of phosphoenolpyruvate, which is the primary acceptor of CO(2) in C4 and some Crassulacean acid metabolism plants. In Flaveria bidentis (Coastal plain yellowtops), this protein is Pyruvate, phosphate dikinase, chloroplastic.